The sequence spans 450 residues: MNEILNTKDINAIGEFFIETWGCQMNEEDSEKLSGMLKKEGYIRTEERENADVIIFNTCCVRENAELKVYGNLGILKGLKSKNPNLIIAVTGCMMQQKGMAETIKKKFPFVDIIIGTHNLHNFPNYLNEVKKKDTSILKIQEKEDSIIENMPIDRKNSMKAFVTIMYGCNNFCTYCIVPYVRGRERSRTPENIEDEIKKLISEGYKEITLLGQNVNSYGKDLEPKVTFADLLERVNTIDGLERVRFMTSHPKDLTDDVIEAIAKCDKLCEQIHLPVQSGSSEILKKMNRHYDREKYLDVVSKIKKLIPNVALSTDIIVGFPGETEKDFEETLSLVKEVEYDSAFTFLYSIRKGTPAAKFEDQVPEDVKHKRFNRLVEVVNEISAKKNKAYEGKIEEVLVEGTSKNDENKLMGRTRTGKLVNFIGDKDSIGKLVNVKIIKANSFSLTGEEI.

One can recognise an MTTase N-terminal domain in the interval 14 to 132 (GEFFIETWGC…FPNYLNEVKK (119 aa)). Residues cysteine 23, cysteine 59, cysteine 93, cysteine 169, cysteine 173, and cysteine 176 each contribute to the [4Fe-4S] cluster site. The Radical SAM core domain maps to 155 to 385 (RKNSMKAFVT…VEVVNEISAK (231 aa)). One can recognise a TRAM domain in the interval 388–450 (KAYEGKIEEV…NSFSLTGEEI (63 aa)).

The protein belongs to the methylthiotransferase family. MiaB subfamily. As to quaternary structure, monomer. Requires [4Fe-4S] cluster as cofactor.

The protein resides in the cytoplasm. The enzyme catalyses N(6)-dimethylallyladenosine(37) in tRNA + (sulfur carrier)-SH + AH2 + 2 S-adenosyl-L-methionine = 2-methylsulfanyl-N(6)-dimethylallyladenosine(37) in tRNA + (sulfur carrier)-H + 5'-deoxyadenosine + L-methionine + A + S-adenosyl-L-homocysteine + 2 H(+). Its function is as follows. Catalyzes the methylthiolation of N6-(dimethylallyl)adenosine (i(6)A), leading to the formation of 2-methylthio-N6-(dimethylallyl)adenosine (ms(2)i(6)A) at position 37 in tRNAs that read codons beginning with uridine. The chain is tRNA-2-methylthio-N(6)-dimethylallyladenosine synthase from Clostridium botulinum (strain Loch Maree / Type A3).